The sequence spans 181 residues: DNA-packaging protein NU1 homolog (181 aa).

This sequence to phage lambda DNA packaging protein NU1.

The polypeptide is DNA-packaging protein NU1 homolog (nohD) (Escherichia coli (strain K12)).